The chain runs to 194 residues: NADH-quinone oxidoreductase subunit B 1 (194 aa).

Residues cysteine 73, cysteine 74, cysteine 138, and cysteine 168 each coordinate [4Fe-4S] cluster.

It belongs to the complex I 20 kDa subunit family. In terms of assembly, NDH-1 is composed of 14 different subunits. Subunits NuoB, C, D, E, F, and G constitute the peripheral sector of the complex. The cofactor is [4Fe-4S] cluster.

Its subcellular location is the cell inner membrane. The enzyme catalyses a quinone + NADH + 5 H(+)(in) = a quinol + NAD(+) + 4 H(+)(out). In terms of biological role, NDH-1 shuttles electrons from NADH, via FMN and iron-sulfur (Fe-S) centers, to quinones in the respiratory chain. The immediate electron acceptor for the enzyme in this species is believed to be ubiquinone. Couples the redox reaction to proton translocation (for every two electrons transferred, four hydrogen ions are translocated across the cytoplasmic membrane), and thus conserves the redox energy in a proton gradient. In Rhizobium etli (strain CIAT 652), this protein is NADH-quinone oxidoreductase subunit B 1.